The sequence spans 81 residues: UPF0410 protein YwzA (81 aa).

The next 3 helical transmembrane spans lie at Met-1–Val-21, Gly-27–Leu-47, and Gly-56–Leu-76.

It belongs to the UPF0410 family.

The protein resides in the cell membrane. This is UPF0410 protein YwzA (ywzA) from Bacillus subtilis (strain 168).